Consider the following 455-residue polypeptide: T-box protein VegT (455 aa).

The segment at residues 57-230 (LWAQFHQEGT…HNPFAKGFRE (174 aa)) is a DNA-binding region (T-box). Residues 229–241 (REQERSHKRDDVL) show a composition bias toward basic and acidic residues. Disordered stretches follow at residues 229–276 (REQE…RVKE) and 295–360 (ANQG…PDSD). Polar residues predominate over residues 308-326 (GANQEQQVPSSSSNFYNRN).

Forms a repression complex on the promoters of the nodal/nr1 and siamois genes with the maternal factors tcf7l1/tcf3 and pouf5.1/oct-25. Interacts (via C-terminus) with tcf7l1/tcf3 (via N-terminus). Also interacts with the other POU-domain transcription factors pou5f1.2/oct-91 and pou5f1.3/oct-60. As to expression, vegetally localized in oocytes and expressed in the presumptive endoderm and mesoderm at early gastrula stage. Expression is down-regulated in the endoderm by the end of gastrulation but maintained in the lateral and ventral mesoderm of the blastopore lip.

It localises to the nucleus. Transcription factor required for both mesoderm and endoderm formation in the embryo; signaling determinants and concentration levels may determine which germ layer is formed. Acts together with beta-catenin to activate genes that are responsible for mesoderm induction including wnt-8, eomes t/bra, siamois, mix1 and sox17. Directly binds to promoter DNA. Patterns the mesoderm along the dorsoventral and posterior axis. Activates siamois gene transcription when alone or in combination with beta-catenin, but inhibits siamois transcription in combination with pou5f1.1/oct-25. This is T-box protein VegT from Xenopus tropicalis (Western clawed frog).